Here is a 295-residue protein sequence, read N- to C-terminus: Apolipoprotein E (295 aa).

The first 18 residues, 1-18 (MKVLWAALLVTFLAGCQA), serve as a signal peptide directing secretion. Repeat copies occupy residues 80–101 (TLMD…EQLS), 102–123 (PVAE…ARLG), 124–145 (ADME…AMLG), 146–167 (QSTE…KRLL), 193–211 (TVGS…AKLR), and 212–233 (ARME…EQVA). A 6 X 22 AA approximate tandem repeats region spans residues 80–233 (TLMDETMKEL…RLDEVKEQVA (154 aa)). Methionine 143 is modified (methionine sulfoxide). Phosphoserine is present on serine 147. The segment at 158 to 168 (HLRKLRKRLLR) is LDL and other lipoprotein receptors binding. 162–165 (LRKR) is a binding site for heparin. Positions 191–268 (AATVGSLASQ…SWFEPLVEDM (78 aa)) are lipid-binding and lipoprotein association. The tract at residues 244 to 295 (QQISLQAEAFQARLKSWFEPLVEDMQRQWAGLVEKVQAAVGASTAPVPSDNH) is homooligomerization. Residues 256-268 (RLKSWFEPLVEDM) are specificity for association with VLDL.

It belongs to the apolipoprotein A1/A4/E family. Homotetramer. May interact with ABCA1; functionally associated with ABCA1 in the biogenesis of HDLs. May interact with APP/A4 amyloid-beta peptide; the interaction is extremely stable in vitro but its physiological significance is unclear. May interact with MAPT. May interact with MAP2. In the cerebrospinal fluid, interacts with secreted SORL1. Interacts with PMEL; this allows the loading of PMEL luminal fragment on ILVs to induce fibril nucleation. APOE exists as multiple glycosylated and sialylated glycoforms within cells and in plasma. The extent of glycosylation and sialylation are tissue and context specific. Post-translationally, glycated in plasma VLDL. In terms of processing, phosphorylated by FAM20C in the extracellular medium.

It is found in the secreted. It localises to the extracellular space. Its subcellular location is the extracellular matrix. The protein localises to the extracellular vesicle. The protein resides in the endosome. It is found in the multivesicular body. Its function is as follows. APOE is an apolipoprotein, a protein associating with lipid particles, that mainly functions in lipoprotein-mediated lipid transport between organs via the plasma and interstitial fluids. APOE is a core component of plasma lipoproteins and is involved in their production, conversion and clearance. Apolipoproteins are amphipathic molecules that interact both with lipids of the lipoprotein particle core and the aqueous environment of the plasma. As such, APOE associates with chylomicrons, chylomicron remnants, very low density lipoproteins (VLDL) and intermediate density lipoproteins (IDL) but shows a preferential binding to high-density lipoproteins (HDL). It also binds a wide range of cellular receptors including the LDL receptor/LDLR, the LDL receptor-related proteins LRP1, LRP2 and LRP8 and the very low-density lipoprotein receptor/VLDLR that mediate the cellular uptake of the APOE-containing lipoprotein particles. Finally, APOE also has a heparin-binding activity and binds heparan-sulfate proteoglycans on the surface of cells, a property that supports the capture and the receptor-mediated uptake of APOE-containing lipoproteins by cells. A main function of APOE is to mediate lipoprotein clearance through the uptake of chylomicrons, VLDLs, and HDLs by hepatocytes. APOE is also involved in the biosynthesis by the liver of VLDLs as well as their uptake by peripheral tissues ensuring the delivery of triglycerides and energy storage in muscle, heart and adipose tissues. By participating in the lipoprotein-mediated distribution of lipids among tissues, APOE plays a critical role in plasma and tissues lipid homeostasis. APOE is also involved in two steps of reverse cholesterol transport, the HDLs-mediated transport of cholesterol from peripheral tissues to the liver, and thereby plays an important role in cholesterol homeostasis. First, it is functionally associated with ABCA1 in the biogenesis of HDLs in tissues. Second, it is enriched in circulating HDLs and mediates their uptake by hepatocytes. APOE also plays an important role in lipid transport in the central nervous system, regulating neuron survival and sprouting. This is Apolipoprotein E (APOE) from Macaca mulatta (Rhesus macaque).